The following is a 192-amino-acid chain: Threonylcarbamoyl-AMP synthase (192 aa).

The region spanning 5–192 (TTSVAEAAHC…DATTGRVIRD (188 aa)) is the YrdC-like domain.

The protein belongs to the SUA5 family. TsaC subfamily.

The protein localises to the cytoplasm. The catalysed reaction is L-threonine + hydrogencarbonate + ATP = L-threonylcarbamoyladenylate + diphosphate + H2O. Required for the formation of a threonylcarbamoyl group on adenosine at position 37 (t(6)A37) in tRNAs that read codons beginning with adenine. Catalyzes the conversion of L-threonine, HCO(3)(-)/CO(2) and ATP to give threonylcarbamoyl-AMP (TC-AMP) as the acyladenylate intermediate, with the release of diphosphate. The protein is Threonylcarbamoyl-AMP synthase of Acinetobacter baylyi (strain ATCC 33305 / BD413 / ADP1).